The following is a 781-amino-acid chain: MATQADLMELDMAMEPDRKAAVSHWQQQSYLDSGIHSGATTTAPSLSGKGNPEEEDVDTSQVLYEWEQGFSQSFTQEQVADIDGQYAMTRAQRVRAAMFPETLDEGMQIPSTQFDAAHPTNVQRLAEPSQMLKHAVVNLINYQDDAELATRAIPELTKLLNDEDQVVVNKAAVMVHQLSKKEASRHAIMRSPQMVSAIVRTMQNTNDVETARCTAGTLHNLSHHREGLLAIFKSGGIPALVKMLGSPVDSVLFYAITTLHNLLLHQEGAKMAVRLAGGLQKMVALLNKTNVKFLAITTDCLQILAYGNQESKLIILASGGPQALVNIMRTYTYEKLLWTTSRVLKVLSVCSSNKPAIVEAGGMQALGPHLTDPSQRLVQNCLWTLRNLSDAATKQEGMEGLLGTLVQLLGSDDINVVTCAAGILSNLTCNNYKNKMMVCQVGGIEALVRTVLRAGDREDITEPAICALRHLTSRHQEAEMAQNAVRLHYGLPVVVKLLHPPSHWPLIKATVGLIRNLALCPANHAPLREQGAIPRLVQLLVRAHQDTQRRTSMGGTQQQFVEGVRMEEIVEGCTGALHILARDVHNRIVIRGLNTIPLFVQLLYSPIENIQRVAAGVLCELAQDKEAAEAIEAEGATAPLTELLHSRNEGVATYAAAVLFRMSEDKPQDYKKRLSVELTSSLFRTEPMAWNETADLGLDIGAQGEALGYRQDDPSYRSFHSGGYGQDALGMDPMMEHEMGGHHPGADYPVDGLPDLGHAQDLMDGLPPGDSNQLAWFDTDL.

Alanine 2 bears the N-acetylalanine mark. The interval 2 to 23 is interaction with VCL; that stretch reads ATQADLMELDMAMEPDRKAAVS. Serine 23 carries the post-translational modification Phosphoserine; by GSK3-beta; alternate. O-linked (GlcNAc) serine; alternate glycosylation occurs at serine 23. Serine 29 is subject to Phosphoserine; by GSK3-beta. Serine 33 and serine 37 each carry phosphoserine; by GSK3-beta and HIPK2. The interval 34–57 is disordered; the sequence is GIHSGATTTAPSLSGKGNPEEEDV. Threonine 41 is subject to Phosphothreonine; by GSK3-beta. At serine 45 the chain carries Phosphoserine. An N6-acetyllysine modification is found at lysine 49. Residue tyrosine 64 is modified to Phosphotyrosine; by PTK6. Phosphotyrosine; by FYN and PTK6 is present on tyrosine 142. ARM repeat units follow at residues 151-191, 193-234, 235-276, 277-318, 319-360, 361-389, 400-441, 442-484, 489-530, 531-571, 594-636, and 637-666; these read RAIP…IMRS, QMVS…IFKS, GGIP…VRLA, GGLQ…ILAS, GGPQ…IVEA, GGMQ…RNLS, GLLG…VCQV, GGIE…AQNA, YGLP…LREQ, GAIP…EIVE, NTIP…AEGA, and TAPL…SEDK. The tract at residues 156–178 is interaction with BCL9; it reads LTKLLNDEDQVVVNKAAVMVHQL. Position 191 is a phosphoserine (serine 191). At serine 246 the chain carries Phosphoserine; by CDK5. Phosphotyrosine is present on residues tyrosine 331 and tyrosine 333. Serine 552 carries the phosphoserine modification. Threonine 556 is modified (phosphothreonine). Position 619 is an S-nitrosocysteine (cysteine 619). At serine 675 the chain carries Phosphoserine. Positions 720–781 are disordered; it reads HSGGYGQDAL…NQLAWFDTDL (62 aa). A compositionally biased stretch (basic and acidic residues) spans 734–745; sequence MMEHEMGGHHPG. The tract at residues 772 to 781 is interaction with SCRIB; that stretch reads NQLAWFDTDL.

This sequence belongs to the beta-catenin family. As to quaternary structure, two separate complex-associated pools are found in the cytoplasm. The majority is present as component of an E-cadherin/ catenin adhesion complex composed of at least E-cadherin/CDH1 and beta-catenin/CTNNB1, and possibly alpha-catenin/CTNNA1; the complex is located to adherens junctions. The stable association of CTNNA1 is controversial as CTNNA1 was shown not to bind to F-actin when assembled in the complex. Alternatively, the CTNNA1-containing complex may be linked to F-actin by other proteins such as LIMA1. Another cytoplasmic pool is part of a large complex containing AXIN1, AXIN2, APC, CSNK1A1 and GSK3B that promotes phosphorylation on N-terminal Ser and Thr residues and ubiquitination of CTNNB1. Interacts directly with AXIN1; the interaction is regulated by CK2 via BTRC and its subsequent degradation by the proteasome. Interacts directly with AXIN1; the interaction is regulated by CDK2 phosphorylation. Wnt-dependent activation of DVL antagonizes the action of GSK3B. When GSK3B activity is inhibited the complex dissociates, CTNNB1 is dephosphorylated and is no longer targeted for destruction. The stabilized protein translocates to the nucleus, where it binds TCF/LEF-1 family members, BCL9, BCL9L and possibly also RUVBL1 and CHD8. Binds CTNNBIP and EP300. CTNNB1 forms a ternary complex with LEF1 and EP300 that is disrupted by CTNNBIP1 binding. Interacts with TAX1BP3 (via the PDZ domain); this interaction inhibits the transcriptional activity of CTNNB1. Interacts with AJAP1, BAIAP1, CARM1, CTNNA3, CXADR and PCDH11Y. Binds NHERF1. Interacts with GLIS2. Interacts with XIRP1. Interacts with PTPRU (via the cytoplasmic juxtamembrane domain) and with SLC30A9. Interacts with EMD. Interacts with SCRIB. Interacts with TNIK and TCF7L2. Interacts with SESTD1 and TRPC4. Interacts directly with AXIN1; the interaction is regulated by CDK2 phosphorylation of AXIN1. Interacts with CAV1. Interacts with TRPV4. The TRPV4 and CTNNB1 complex can interact with CDH1. Interacts with VCL. Interacts with PTPRJ. Interacts with PKT7. Interacts with NANOS1. Interacts with CDK2, NDRG2, NEK2 and CDK5. Found in a complex composed of MACF1, APC, AXIN1, CTNNB1 and GSK3B. Interacts with PTK6. Interacts with SOX7; this interaction may lead to proteasomal degradation of active CTNNB1 and thus inhibition of Wnt/beta-catenin-stimulated transcription. Identified in a complex with HINT1 and MITF. Interacts with FHIT. The CTNNB1 and TCF4 complex interacts with PML. Interacts with FERMT2. Identified in a complex with TCF4 and FERMT2. Interacts with RAPGEF2. Interacts with FAT1 (via the cytoplasmic domain). Interacts with RORA. May interact with P-cadherin/CDH3. Interacts with RNF220. Interacts with CTNND2. Interacts (via the C-terminal region) with CBY1. The complex composed, at least, of APC, CTNNB1 and GSK3B interacts with JPT1; the interaction requires the inactive form of GSK3B (phosphorylated at 'Ser-9'). Interacts with DLG5. Interacts with FAM53B; promoting translocation to the nucleus. Interacts with TMEM170B. Interacts with AHI1. Interacts with GID8. Component of an cadherin:catenin adhesion complex composed of at least of CDH26, beta-catenin/CTNNB1, alpha-catenin/CTNNA1 and p120 catenin/CTNND1. Forms a complex comprising APPL1, RUVBL2, APPL2, HDAC1 and HDAC2. Interacts with IRF2BPL; mediates the ubiquitination and degradation of CTNNB1. Interacts with AMFR. Interacts with LMBR1L. Interacts with SOX30; prevents interaction of CTNNB1 with TCF7L2/TCF4 and leads to inhibition of Wnt signaling. Interacts with SOX9; inhibiting CTNNB1 activity by competing with the binding sites of TCF/LEF within CTNNB1, thereby inhibiting the Wnt signaling. Interacts with SPN/CD43 cytoplasmic tail. Interacts (when phosphorylated at Tyr-333) with isoform M2 of PKM (PKM2); promoting transcription activation. Interacts with PKP2 (via HEAD domain). Interacts with CDH1. Interacts (when unphosphorylated) with FLYWCH1, perhaps preventing interaction of CTNNB1 with TCF4, and thereby regulating transcription activation; phosphorylation of CTNNB1 may inhibit the interaction. Interacts (via the central armadillo domains) with probable transcriptional regulator ADNP (via N-terminal region); interaction is direct and stabilizes CTNNB1 by modulating its phosphorylation by glycogen synthase kinase-3 beta GSK3B. Interacts with NR5A2. Interacts with DSG2; the interaction promotes localization of CTNNB1 at cell junctions thus reducing its nuclear localization and subsequent transcription of CTNNB1/TCF-target genes. In terms of processing, phosphorylation by GSK3B requires prior phosphorylation of Ser-45 by another kinase. Phosphorylation proceeds then from Thr-41 to Ser-33. Phosphorylated by NEK2. EGF stimulates tyrosine phosphorylation. Phosphorylated on Ser-33 and Ser-37 by HIPK2. This phosphorylation triggers proteasomal degradation. Phosphorylation at Ser-552 by AMPK promotes stabilization of the protein, enhancing TCF/LEF-mediated transcription. Phosphorylation on Ser-191 and Ser-246 by CDK5. Phosphorylation by CDK2 regulates insulin internalization. Phosphorylation by PTK6 at Tyr-64, Tyr-142, Tyr-331 and/or Tyr-333 with the predominant site at Tyr-64 is not essential for inhibition of transcriptional activity. Phosphorylation by SRC at Tyr-333 promotes interaction with isoform M2 of PKM (PKM2); promoting transcription activation. Post-translationally, ubiquitinated by the SCF(BTRC) E3 ligase complex when phosphorylated by GSK3B, leading to its degradation. Ubiquitinated by a E3 ubiquitin ligase complex containing UBE2D1, SIAH1, CACYBP/SIP, SKP1, APC and TBL1X, leading to its subsequent proteasomal degradation. Ubiquitinated and degraded following interaction with SOX9. Ubiquitinated via 'Lys-11'- and 'Lys-29'-linked ubiquitin chains by UBR5, leading to its stabilization. S-nitrosylation at Cys-619 within adherens junctions promotes VEGF-induced, NO-dependent endothelial cell permeability by disrupting interaction with E-cadherin, thus mediating disassembly adherens junctions. In terms of processing, O-glycosylation at Ser-23 decreases nuclear localization and transcriptional activity, and increases localization to the plasma membrane and interaction with E-cadherin CDH1. Post-translationally, deacetylated at Lys-49 by SIRT1. In terms of tissue distribution, expressed in the testis.

The protein resides in the cytoplasm. It localises to the nucleus. The protein localises to the cytoskeleton. Its subcellular location is the cell junction. It is found in the adherens junction. The protein resides in the cell membrane. It localises to the microtubule organizing center. The protein localises to the centrosome. Its subcellular location is the spindle pole. It is found in the synapse. The protein resides in the cilium basal body. Functionally, key downstream component of the canonical Wnt signaling pathway. In the absence of Wnt, forms a complex with AXIN1, AXIN2, APC, CSNK1A1 and GSK3B that promotes phosphorylation on N-terminal Ser and Thr residues and ubiquitination of CTNNB1 via BTRC and its subsequent degradation by the proteasome. In the presence of Wnt ligand, CTNNB1 is not ubiquitinated and accumulates in the nucleus, where it acts as a coactivator for transcription factors of the TCF/LEF family, leading to activate Wnt responsive genes. Also acts as a coactivator for other transcription factors, such as NR5A2. Promotes epithelial to mesenchymal transition/mesenchymal to epithelial transition (EMT/MET) via driving transcription of CTNNB1/TCF-target genes. Involved in the regulation of cell adhesion, as component of an E-cadherin:catenin adhesion complex. Acts as a negative regulator of centrosome cohesion. Involved in the CDK2/PTPN6/CTNNB1/CEACAM1 pathway of insulin internalization. Blocks anoikis of malignant kidney and intestinal epithelial cells and promotes their anchorage-independent growth by down-regulating DAPK2. Disrupts PML function and PML-NB formation by inhibiting RANBP2-mediated sumoylation of PML. Promotes neurogenesis by maintaining sympathetic neuroblasts within the cell cycle. Involved in chondrocyte differentiation via interaction with SOX9: SOX9-binding competes with the binding sites of TCF/LEF within CTNNB1, thereby inhibiting the Wnt signaling. Acts as a positive regulator of odontoblast differentiation during mesenchymal tooth germ formation, via promoting the transcription of differentiation factors such as LEF1, BMP2 and BMP4. Activity is repressed in a MSX1-mediated manner at the bell stage of mesenchymal tooth germ formation which prevents premature differentiation of odontoblasts. The sequence is that of Catenin beta-1 from Rattus norvegicus (Rat).